A 311-amino-acid polypeptide reads, in one-letter code: HPr kinase/phosphorylase (311 aa).

Residues His-138 and Lys-159 contribute to the active site. An ATP-binding site is contributed by 153-160 (GDSGIGKS). Ser-160 provides a ligand contact to Mg(2+). Residue Asp-177 is the Proton acceptor; for phosphorylation activity. Proton donor; for dephosphorylation activity of the active site. The segment at 201–210 (IEIRGVGIID) is important for the catalytic mechanism of both phosphorylation and dephosphorylation. Position 202 (Glu-202) interacts with Mg(2+). The active site involves Arg-243. The important for the catalytic mechanism of dephosphorylation stretch occupies residues 264 to 269 (PVKTGR).

This sequence belongs to the HPrK/P family. Homohexamer. Mg(2+) is required as a cofactor.

It carries out the reaction [HPr protein]-L-serine + ATP = [HPr protein]-O-phospho-L-serine + ADP + H(+). It catalyses the reaction [HPr protein]-O-phospho-L-serine + phosphate + H(+) = [HPr protein]-L-serine + diphosphate. In terms of biological role, catalyzes the ATP- as well as the pyrophosphate-dependent phosphorylation of a specific serine residue in HPr, a phosphocarrier protein of the phosphoenolpyruvate-dependent sugar phosphotransferase system (PTS). HprK/P also catalyzes the pyrophosphate-producing, inorganic phosphate-dependent dephosphorylation (phosphorolysis) of seryl-phosphorylated HPr (P-Ser-HPr). The two antagonistic activities of HprK/P are regulated by several intracellular metabolites, which change their concentration in response to the absence or presence of rapidly metabolisable carbon sources (glucose, fructose, etc.) in the growth medium. Therefore, by controlling the phosphorylation state of HPr, HPrK/P is a sensor enzyme that plays a major role in the regulation of carbon metabolism and sugar transport: it mediates carbon catabolite repression (CCR), and regulates PTS-catalyzed carbohydrate uptake and inducer exclusion. The polypeptide is HPr kinase/phosphorylase (Streptococcus pneumoniae (strain 70585)).